Here is a 133-residue protein sequence, read N- to C-terminus: ATP synthase epsilon chain (133 aa).

The protein belongs to the ATPase epsilon chain family. In terms of assembly, F-type ATPases have 2 components, CF(1) - the catalytic core - and CF(0) - the membrane proton channel. CF(1) has five subunits: alpha(3), beta(3), gamma(1), delta(1), epsilon(1). CF(0) has three main subunits: a, b and c.

The protein localises to the cell inner membrane. Its function is as follows. Produces ATP from ADP in the presence of a proton gradient across the membrane. The protein is ATP synthase epsilon chain of Paramagnetospirillum magneticum (strain ATCC 700264 / AMB-1) (Magnetospirillum magneticum).